Here is a 1023-residue protein sequence, read N- to C-terminus: Protein FAM13A (1023 aa).

In terms of domain architecture, Rho-GAP spans 43-231; sequence VSLQELERQG…KILENYNTLF (189 aa). The disordered stretch occupies residues 269 to 290; sequence LERDMPKPPPKTKIPKSRSEGS. The residue at position 345 (Ser-345) is a Phosphoserine. 2 disordered regions span residues 381 to 437 and 459 to 562; these read VNNS…SGFN and CAGE…EVPQ. Positions 384–405 are enriched in low complexity; the sequence is SGGQSSEDSESGTLSASSATSA. 2 stretches are compositionally biased toward basic and acidic residues: residues 412–427 and 509–524; these read SKEQ…KGLI and SDER…HTQH. The segment covering 536-549 has biased composition (polar residues); it reads PSLSDTKQQRNQDA. 2 positions are modified to phosphoserine: Ser-597 and Ser-617. Disordered stretches follow at residues 628-663 and 726-759; these read QYLD…QEDL and ISEE…KKQE. Positions 666 to 730 form a coiled coil; that stretch reads AQLTRRIQSL…ESKLKISEED (65 aa). A Phosphoserine modification is found at Ser-727. Thr-732 is subject to Phosphothreonine. The segment covering 738–748 has biased composition (polar residues); sequence RSNTLPKSFGS. A compositionally biased stretch (basic and acidic residues) spans 750–759; sequence LEKEDEKKQE. Residues 946 to 978 are a coiled coil; sequence ASIPELLEHLQEMREEKKRIRKKLRDFEDNFFR.

The protein belongs to the FAM13 family. In terms of tissue distribution, isoform 1 is widely expressed, with highest expression in skeletal muscle, thymus, brain and lung. Isoform 3 is less abundant than isoform 1 and predominantly expressed in kidney, pancreas, liver, lung and thymus.

This chain is Protein FAM13A (FAM13A), found in Homo sapiens (Human).